The chain runs to 183 residues: Bifunctional protein PyrR (183 aa).

The PRPP-binding signature appears at 102–114 (VVLVDDVLFSGRT).

It belongs to the purine/pyrimidine phosphoribosyltransferase family. PyrR subfamily.

The catalysed reaction is UMP + diphosphate = 5-phospho-alpha-D-ribose 1-diphosphate + uracil. In terms of biological role, regulates the transcription of the pyrimidine nucleotide (pyr) operon in response to exogenous pyrimidines. Its function is as follows. Also displays a weak uracil phosphoribosyltransferase activity which is not physiologically significant. The sequence is that of Bifunctional protein PyrR from Leifsonia xyli subsp. xyli (strain CTCB07).